A 766-amino-acid polypeptide reads, in one-letter code: UPF0313 protein PP_4872 (766 aa).

Residues 371-649 (AYEMIRFSVN…KAFLRYHDPK (279 aa)) form the Radical SAM core domain. Residues Cys-385, Cys-389, and Cys-392 each contribute to the [4Fe-4S] cluster site. The interval 670–766 (GKHQLIPLHQ…KKPRQPVIPR (97 aa)) is disordered. A compositionally biased stretch (basic and acidic residues) spans 723–735 (KPWDKREKAKAEA).

This sequence belongs to the UPF0313 family. Requires [4Fe-4S] cluster as cofactor.

This is UPF0313 protein PP_4872 from Pseudomonas putida (strain ATCC 47054 / DSM 6125 / CFBP 8728 / NCIMB 11950 / KT2440).